A 735-amino-acid polypeptide reads, in one-letter code: DNA replication licensing factor mcm5-B (735 aa).

In terms of domain architecture, MCM spans 332–538; the sequence is IYETVAKSIA…RDMTLAKHVM (207 aa). Arginine 372 is a binding site for ADP. Residues 513-516 carry the Arginine finger motif; sequence SRFD.

Belongs to the MCM family. Component of the mcm2-7 complex (RLF-M). The complex forms a toroidal hexameric ring with the proposed subunit order mcm2-mcm6-mcm4-mcm7-mcm3-mcm5. The heterodimer of mmcm3/mcm5 interacts with mcm4, mmcm6, mcm7 and weakly with mcm2. Component of the CMG helicase complex, composed of the mcm2-7 complex, the GINS complex and cdc45.

The protein resides in the nucleus. Its subcellular location is the chromosome. The catalysed reaction is ATP + H2O = ADP + phosphate + H(+). Acts as a component of the MCM2-7 complex (MCM complex) which is the replicative helicase essential for 'once per cell cycle' DNA replication initiation and elongation in eukaryotic cells. Core component of CDC45-MCM-GINS (CMG) helicase, the molecular machine that unwinds template DNA during replication, and around which the replisome is built. The active ATPase sites in the MCM2-7 ring are formed through the interaction surfaces of two neighboring subunits such that a critical structure of a conserved arginine finger motif is provided in trans relative to the ATP-binding site of the Walker A box of the adjacent subunit. The six ATPase active sites, however, are likely to contribute differentially to the complex helicase activity. This is DNA replication licensing factor mcm5-B (mcm5-b) from Xenopus laevis (African clawed frog).